Here is a 218-residue protein sequence, read N- to C-terminus: Probable nicotinate-nucleotide adenylyltransferase (218 aa).

This sequence belongs to the NadD family.

The catalysed reaction is nicotinate beta-D-ribonucleotide + ATP + H(+) = deamido-NAD(+) + diphosphate. The protein operates within cofactor biosynthesis; NAD(+) biosynthesis; deamido-NAD(+) from nicotinate D-ribonucleotide: step 1/1. Catalyzes the reversible adenylation of nicotinate mononucleotide (NaMN) to nicotinic acid adenine dinucleotide (NaAD). The sequence is that of Probable nicotinate-nucleotide adenylyltransferase from Helicobacter hepaticus (strain ATCC 51449 / 3B1).